Consider the following 501-residue polypeptide: Glycerol kinase (501 aa).

T11 lines the ADP pocket. T11, T12, and S13 together coordinate ATP. T11 is a sn-glycerol 3-phosphate binding site. R15 is an ADP binding site. Residues R81, E82, Y133, and D242 each contribute to the sn-glycerol 3-phosphate site. Glycerol-binding residues include R81, E82, Y133, D242, and Q243. ADP is bound by residues T264 and G307. Positions 264, 307, 311, and 409 each coordinate ATP. ADP is bound by residues G409 and N413.

This sequence belongs to the FGGY kinase family.

The enzyme catalyses glycerol + ATP = sn-glycerol 3-phosphate + ADP + H(+). It functions in the pathway polyol metabolism; glycerol degradation via glycerol kinase pathway; sn-glycerol 3-phosphate from glycerol: step 1/1. Its activity is regulated as follows. Inhibited by fructose 1,6-bisphosphate (FBP). Its function is as follows. Key enzyme in the regulation of glycerol uptake and metabolism. Catalyzes the phosphorylation of glycerol to yield sn-glycerol 3-phosphate. The protein is Glycerol kinase of Borreliella afzelii (strain PKo) (Borrelia afzelii).